Here is a 188-residue protein sequence, read N- to C-terminus: Anaphase-promoting complex subunit 10 (188 aa).

A DOC domain is found at 4-187 (NSNINSNSRL…SPEVSMFQTL (184 aa)).

Belongs to the APC10 family. The APC/C is composed of at least 13 subunits that stay tightly associated throughout the cell cycle: anapc1, anapc2, anapc3, anapc4, anapc5, anapc6, anapc7, anapc8, anapc10, anapc11, cdc20, cdc26 and cdh1.

The protein localises to the nucleus. It participates in protein modification; protein ubiquitination. Its function is as follows. Component of the anaphase promoting complex/cyclosome (APC/C), a cell cycle-regulated E3 ubiquitin-protein ligase complex that controls progression through mitosis and the G1 phase of the cell cycle. This chain is Anaphase-promoting complex subunit 10 (anapc10), found in Dictyostelium discoideum (Social amoeba).